The chain runs to 179 residues: Bifunctional protein PyrR (179 aa).

A PRPP-binding motif is present at residues 97–109; that stretch reads VILIDDVLFTGRT.

Belongs to the purine/pyrimidine phosphoribosyltransferase family. PyrR subfamily.

It carries out the reaction UMP + diphosphate = 5-phospho-alpha-D-ribose 1-diphosphate + uracil. In terms of biological role, regulates the transcription of the pyrimidine nucleotide (pyr) operon in response to exogenous pyrimidines. Also displays a weak uracil phosphoribosyltransferase activity which is not physiologically significant. This Actinobacillus pleuropneumoniae serotype 5b (strain L20) protein is Bifunctional protein PyrR.